A 433-amino-acid chain; its full sequence is Methylenetetrahydrofolate--tRNA-(uracil-5-)-methyltransferase TrmFO (433 aa).

FAD is bound at residue 7 to 12; the sequence is GGGLAG.

Belongs to the MnmG family. TrmFO subfamily. FAD serves as cofactor.

Its subcellular location is the cytoplasm. It catalyses the reaction uridine(54) in tRNA + (6R)-5,10-methylene-5,6,7,8-tetrahydrofolate + NADH + H(+) = 5-methyluridine(54) in tRNA + (6S)-5,6,7,8-tetrahydrofolate + NAD(+). The catalysed reaction is uridine(54) in tRNA + (6R)-5,10-methylene-5,6,7,8-tetrahydrofolate + NADPH + H(+) = 5-methyluridine(54) in tRNA + (6S)-5,6,7,8-tetrahydrofolate + NADP(+). Functionally, catalyzes the folate-dependent formation of 5-methyl-uridine at position 54 (M-5-U54) in all tRNAs. In Natranaerobius thermophilus (strain ATCC BAA-1301 / DSM 18059 / JW/NM-WN-LF), this protein is Methylenetetrahydrofolate--tRNA-(uracil-5-)-methyltransferase TrmFO.